The primary structure comprises 439 residues: Acyl-coenzyme A thioesterase 10, mitochondrial (439 aa).

The transit peptide at 1-21 (MKRAAMRLWTLNKGLLTHGRG) directs the protein to the mitochondrion. HotDog ACOT-type domains lie at 85–209 (SYIE…QDSE) and 289–401 (EDTK…EKEV).

The protein belongs to the acyl coenzyme A hydrolase family.

The protein resides in the mitochondrion. Its function is as follows. Catalyzes the hydrolysis of acyl-CoAs into free fatty acids and coenzyme A (CoASH), regulating their respective intracellular levels. Active on long chain acyl-CoAs. This is Acyl-coenzyme A thioesterase 10, mitochondrial from Mus musculus (Mouse).